The sequence spans 614 residues: Vitamin B12 transporter BtuB (614 aa).

The N-terminal stretch at 1–20 (MIKKASLLTACSVTAFSAWA) is a signal peptide. Residues 21–157 (QDTSPDTLVV…NIITTRDEPG (137 aa)) lie on the Periplasmic side of the membrane. The TonB box signature appears at 26 to 33 (DTLVVTAN). Positions 38–152 (PRSTVLAPTT…IGGVVNIITT (115 aa)) constitute a TBDR plug domain. Cyanocob(III)alamin-binding positions include Leu-83, Ser-85, Asn-92, and 110–111 (VS). The region spanning 155 to 614 (EPGTEISAGW…EYTLSGSYTF (460 aa)) is the TBDR beta-barrel domain. A beta stranded transmembrane segment spans residues 158–165 (TEISAGWG). Topologically, residues 166–168 (SNS) are extracellular. A beta stranded transmembrane segment spans residues 169–178 (YQNYDVSTQQ). Topologically, residues 179–183 (QLGDK) are periplasmic. A beta stranded transmembrane segment spans residues 184–195 (TRVTLLGDYAHT). At 196-216 (HGYDVVAYGNTGTQAQTDNDG) the chain is on the extracellular side. The Ca(2+) site is built by Asp-199, Gln-211, Asp-213, and Asp-215. Residues 217-227 (FLSKTLYGALE) traverse the membrane as a beta stranded segment. The Periplasmic portion of the chain corresponds to 228 to 231 (HNFT). Residues 232 to 248 (DAWSGFVRGYGYDNRTN) traverse the membrane as a beta stranded segment. Ca(2+) contacts are provided by Tyr-249 and Asp-250. The Extracellular portion of the chain corresponds to 249–262 (YDAYYSPGSPLLDT). Ala-251 contacts cyanocob(III)alamin. Asp-261 is a binding site for Ca(2+). Residues 263 to 277 (RKLYSQSWDAGLRYN) form a beta stranded membrane-spanning segment. A topological domain (periplasmic) is located at residue Gly-278. The chain crosses the membrane as a beta stranded span at residues 279–296 (ELIKSQLITSYSHSKDYN). The Extracellular segment spans residues 297-308 (YDPHYGRYDSSA). Cyanocob(III)alamin is bound at residue Thr-309. A beta stranded membrane pass occupies residues 309-325 (TLDEMKQYTVQWANNVI). At 326–327 (VG) the chain is on the periplasmic side. Residues 328 to 337 (HGSIGAGVDW) form a beta stranded membrane-spanning segment. The Extracellular portion of the chain corresponds to 338-352 (QKQTTTPGTGYVEDG). A beta stranded transmembrane segment spans residues 353 to 369 (YDQRNTGIYLTGLQQVG). Asp-370 is a topological domain (periplasmic). Residues 371-381 (FTFEGAARSDD) form a beta stranded membrane-spanning segment. The Extracellular portion of the chain corresponds to 382–384 (NSQ). Residues 385 to 400 (FGRHGTWQTSAGWEFI) traverse the membrane as a beta stranded segment. Residues 401-402 (EG) are Periplasmic-facing. Residues 403-417 (YRFIASYGTSYKAPN) traverse the membrane as a beta stranded segment. At 418–433 (LGQLYGFYGNPNLDPE) the chain is on the extracellular side. A beta stranded transmembrane segment spans residues 434–443 (KSKQWEGAFE). The Periplasmic portion of the chain corresponds to 444–448 (GLTAG). A beta stranded membrane pass occupies residues 449–458 (VNWRISGYRN). Residues 459–472 (DVSDLIDYDDHTLK) lie on the Extracellular side of the membrane. Residues 473 to 490 (YYNEGKARIKGVEATANF) traverse the membrane as a beta stranded segment. At 491 to 493 (DTG) the chain is on the periplasmic side. A beta stranded membrane pass occupies residues 494–509 (PLTHTVSYDYVDARNA). Residues 510 to 516 (ITDTPLL) are Extracellular-facing. Cyanocob(III)alamin is bound at residue Arg-517. The beta stranded transmembrane segment at 517-529 (RRAKQQVKYQLDW) threads the bilayer. Residues 530 to 534 (QLYDF) lie on the Periplasmic side of the membrane. A beta stranded transmembrane segment spans residues 535-550 (DWGITYQYLGTRYDKD). Tyr-551 lines the cyanocob(III)alamin pocket. At 551 to 557 (YSSYPYQ) the chain is on the extracellular side. A beta stranded transmembrane segment spans residues 558 to 572 (TVKMGGVSLWDLAVA). Residues 573–584 (YPVTSHLTVRGK) lie on the Periplasmic side of the membrane. A beta stranded membrane pass occupies residues 585–596 (IANLFDKDYETV). Residues 597–601 (YGYQT) are Extracellular-facing. Residues 597–614 (YGYQTAGREYTLSGSYTF) carry the TonB C-terminal box motif. Residues 602–614 (AGREYTLSGSYTF) form a beta stranded membrane-spanning segment.

The protein belongs to the TonB-dependent receptor family. BtuB (TC 1.B.14.3.1) subfamily. In terms of assembly, interacts with TonB. (Microbial infection) The hairpin motif of the receptor-binding domain of colicin E3 (ColE3) interacts with BtuB without displacing BtuB's central plug. An N-terminal fragment of E3 binds OmpF; trimeric complexes with ColE3, BtuB and OmpF can be cross-linked and immunoprecipitated.

Its subcellular location is the cell outer membrane. Calcium increases vitamin B12 binding affinity by a factor of 50-100. With respect to regulation, (Microbial infection) Colicins E1, E3 and K inhibit cyanocobalamin (CN-B12) uptake; E1 and E3 inhibit binding of CN-B12 to cells while colicin K inhibits a later, energy-dependent step of CN-B12. In terms of biological role, involved in the active translocation of vitamin B12 (cyanocobalamin) across the outer membrane to the periplasmic space. It derives its energy for transport by interacting with the trans-periplasmic membrane protein TonB. (Microbial infection) Acts as a receptor for bacteriophages BF23 and C1, and for A and E colicins. Cyanocobalamin (CN-B12) in solid medium protects against colicins E1 and E3. Does not act as the translocon for colicin E3 (ColE3). The translocon is OmpF; trimeric complexes with ColE3, BtuB and OmpF can be cross-linked and immunoprecipitated. This is Vitamin B12 transporter BtuB from Escherichia coli (strain K12).